Consider the following 116-residue polypeptide: MAGRSGDSDEELIRTVRLIKLLYQSNPPPNPEGTRQARRNRRRRWRERQRQIHSISERILGTYLGRSAEPVPLQLPPLERLTLDCNEDCGTSGTQGVGSPQILVESPTVLESGTKE.

S5 and S8 each carry phosphoserine; by host CK2. Residues 18-26 are homomultimerization; sequence LIKLLYQSN. Residues 21–49 are disordered; that stretch reads LLYQSNPPPNPEGTRQARRNRRRRWRERQ. The Nuclear localization signal and RNA-binding (RRE) signature appears at 34-50; sequence TRQARRNRRRRWRERQR. Basic residues predominate over residues 36 to 47; that stretch reads QARRNRRRRWRE. Positions 73–84 match the Nuclear export signal and binding to XPO1 motif; sequence LQLPPLERLTLD. S92 and S99 each carry phosphoserine; by host. Residues 92 to 116 are disordered; the sequence is SGTQGVGSPQILVESPTVLESGTKE.

Belongs to the HIV-1 REV protein family. Homomultimer; when bound to the RRE. Multimeric assembly is essential for activity and may involve XPO1. Binds to human KPNB1, XPO1, TNPO1, RANBP5 and IPO7. Interacts with the viral Integrase. Interacts with human KHDRBS1. Interacts with human NAP1; this interaction decreases Rev multimerization and stimulates its activity. Interacts with human DEAD-box helicases DDX3 and DDX24; these interactions may serve for viral RNA export to the cytoplasm and packaging, respectively. Interacts with human PSIP1; this interaction may inhibit HIV-1 DNA integration by promoting dissociation of the Integrase-LEDGF/p75 complex. Asymmetrically arginine dimethylated at one site by host PRMT6. Methylation impairs the RNA-binding activity and export of viral RNA from the nucleus to the cytoplasm. In terms of processing, phosphorylated by protein kinase CK2. Presence of, and maybe binding to the N-terminus of the regulatory beta subunit of CK2 is necessary for CK2-mediated Rev's phosphorylation.

Its subcellular location is the host nucleus. The protein resides in the host nucleolus. It localises to the host cytoplasm. In terms of biological role, escorts unspliced or incompletely spliced viral pre-mRNAs (late transcripts) out of the nucleus of infected cells. These pre-mRNAs carry a recognition sequence called Rev responsive element (RRE) located in the env gene, that is not present in fully spliced viral mRNAs (early transcripts). This function is essential since most viral proteins are translated from unspliced or partially spliced pre-mRNAs which cannot exit the nucleus by the pathway used by fully processed cellular mRNAs. Rev itself is translated from a fully spliced mRNA that readily exits the nucleus. Rev's nuclear localization signal (NLS) binds directly to KPNB1/Importin beta-1 without previous binding to KPNA1/Importin alpha-1. KPNB1 binds to the GDP bound form of RAN (Ran-GDP) and targets Rev to the nucleus. In the nucleus, the conversion from Ran-GDP to Ran-GTP dissociates Rev from KPNB1 and allows Rev's binding to the RRE in viral pre-mRNAs. Rev multimerization on the RRE via cooperative assembly exposes its nuclear export signal (NES) to the surface. Rev can then form a complex with XPO1/CRM1 and Ran-GTP, leading to nuclear export of the complex. Conversion from Ran-GTP to Ran-GDP mediates dissociation of the Rev/RRE/XPO1/RAN complex, so that Rev can return to the nucleus for a subsequent round of export. Beside KPNB1, also seems to interact with TNPO1/Transportin-1, RANBP5/IPO5 and IPO7/RANBP7 for nuclear import. The nucleoporin-like HRB/RIP is an essential cofactor that probably indirectly interacts with Rev to release HIV RNAs from the perinuclear region to the cytoplasm. This chain is Protein Rev, found in Homo sapiens (Human).